Consider the following 116-residue polypeptide: Putative membrane protein (116 aa).

Residues 13 to 33 (VISIITFILVIAIFVIEIVSC) form a helical membrane-spanning segment.

It is found in the host membrane. The chain is Putative membrane protein from Alethinophid 1 reptarenavirus (isolate AlRrV1/Boa/USA/BC/2009) (Golden Gate virus).